Consider the following 731-residue polypeptide: 1,4-alpha-glucan branching enzyme GlgB (731 aa).

Asp-411 serves as the catalytic Nucleophile. Glu-464 (proton donor) is an active-site residue.

It belongs to the glycosyl hydrolase 13 family. GlgB subfamily. Monomer.

The enzyme catalyses Transfers a segment of a (1-&gt;4)-alpha-D-glucan chain to a primary hydroxy group in a similar glucan chain.. Its pathway is glycan biosynthesis; glycogen biosynthesis. In terms of biological role, catalyzes the formation of the alpha-1,6-glucosidic linkages in glycogen by scission of a 1,4-alpha-linked oligosaccharide from growing alpha-1,4-glucan chains and the subsequent attachment of the oligosaccharide to the alpha-1,6 position. This is 1,4-alpha-glucan branching enzyme GlgB from Mycobacterium bovis (strain ATCC BAA-935 / AF2122/97).